Here is a 167-residue protein sequence, read N- to C-terminus: MANIEKKNNSELQEKLITVNRVSKTVKGGRIFSFTALTVVGNGEGRVGFGYGKAREVPAAIQKAMEKARRNMVTIPLVNKTLQHSLKGSHTGSNIFMKPASDGTGIIAGGAMRAVLEVAGIHNVLAKTYGSTNPINVVRATMNGLTNMKSPEMIAAKRNKLIEDILG.

Positions leucine 12 to isoleucine 75 constitute an S5 DRBM domain.

This sequence belongs to the universal ribosomal protein uS5 family. In terms of assembly, part of the 30S ribosomal subunit. Contacts proteins S4 and S8.

Its function is as follows. With S4 and S12 plays an important role in translational accuracy. In terms of biological role, located at the back of the 30S subunit body where it stabilizes the conformation of the head with respect to the body. The sequence is that of Small ribosomal subunit protein uS5 from Buchnera aphidicola subsp. Schizaphis graminum (strain Sg).